A 96-amino-acid polypeptide reads, in one-letter code: ESAT-6-like protein SAG1039 (96 aa).

The protein belongs to the WXG100 family. sagEsxA-like subfamily. As to quaternary structure, homodimer.

The chain is ESAT-6-like protein SAG1039 from Streptococcus agalactiae serotype V (strain ATCC BAA-611 / 2603 V/R).